Consider the following 547-residue polypeptide: Chaperonin GroEL (547 aa).

Residues 29–32, Lys50, 86–90, Gly414, 477–479, and Asp493 contribute to the ATP site; these read TMGP, DGTTT, and NAA.

This sequence belongs to the chaperonin (HSP60) family. In terms of assembly, forms a cylinder of 14 subunits composed of two heptameric rings stacked back-to-back. Interacts with the co-chaperonin GroES.

Its subcellular location is the cytoplasm. It carries out the reaction ATP + H2O + a folded polypeptide = ADP + phosphate + an unfolded polypeptide.. In terms of biological role, together with its co-chaperonin GroES, plays an essential role in assisting protein folding. The GroEL-GroES system forms a nano-cage that allows encapsulation of the non-native substrate proteins and provides a physical environment optimized to promote and accelerate protein folding. The polypeptide is Chaperonin GroEL (Campylobacter rectus (Wolinella recta)).